The following is a 329-amino-acid chain: Quinone oxidoreductase (329 aa).

Residue Ala-2 is modified to N-acetylalanine. Lys-23 carries the post-translational modification N6-acetyllysine. NADP(+) contacts are provided by residues Tyr-53, 158 to 161 (SGGV), Gly-181, His-200, Asn-229, 246 to 249 (VGSR), and 269 to 271 (VTV). The residue at position 248 (Ser-248) is a Phosphoserine. The residue at position 296 (Lys-296) is an N6-succinyllysine.

It belongs to the zinc-containing alcohol dehydrogenase family. Quinone oxidoreductase subfamily. Homotetramer.

The protein localises to the cytoplasm. The enzyme catalyses 2 a quinone + NADPH + H(+) = 2 a 1,4-benzosemiquinone + NADP(+). In terms of biological role, does not have alcohol dehydrogenase activity. Binds NADP and acts through a one-electron transfer process. Orthoquinones, such as 1,2-naphthoquinone or 9,10-phenanthrenequinone, are the best substrates (in vitro). May act in the detoxification of xenobiotics. Interacts with (AU)-rich elements (ARE) in the 3'-UTR of target mRNA species and enhances their stability. NADPH binding interferes with mRNA binding. This chain is Quinone oxidoreductase (CRYZ), found in Pongo abelii (Sumatran orangutan).